The following is a 773-amino-acid chain: Endonuclease MutS2 (773 aa).

334-341 provides a ligand contact to ATP; sequence GANAGGKT. One can recognise a Smr domain in the interval 698 to 773; the sequence is VDLRGMRADV…GDGMTMVTLK (76 aa).

The protein belongs to the DNA mismatch repair MutS family. MutS2 subfamily. In terms of assembly, homodimer. Binds to stalled ribosomes, contacting rRNA.

Functionally, endonuclease that is involved in the suppression of homologous recombination and thus may have a key role in the control of bacterial genetic diversity. In terms of biological role, acts as a ribosome collision sensor, splitting the ribosome into its 2 subunits. Detects stalled/collided 70S ribosomes which it binds and splits by an ATP-hydrolysis driven conformational change. Acts upstream of the ribosome quality control system (RQC), a ribosome-associated complex that mediates the extraction of incompletely synthesized nascent chains from stalled ribosomes and their subsequent degradation. Probably generates substrates for RQC. The polypeptide is Endonuclease MutS2 (Solidesulfovibrio magneticus (strain ATCC 700980 / DSM 13731 / RS-1) (Desulfovibrio magneticus)).